Reading from the N-terminus, the 192-residue chain is Hydrophobin-like protein rodD (192 aa).

Disulfide bonds link Cys-45–Cys-106, Cys-50–Cys-99, and Cys-107–Cys-112.

The protein belongs to the fungal hydrophobin family. In terms of assembly, self-assembles to form functional amyloid fibrils called rodlets. Self-assembly into fibrillar rodlets occurs spontaneously at hydrophobic:hydrophilic interfaces and the rodlets further associate laterally to form amphipathic monolayers.

Functionally, aerial growth, conidiation, and dispersal of filamentous fungi in the environment rely upon a capability of their secreting small amphipathic proteins called hydrophobins (HPBs) with low sequence identity. Class I can self-assemble into an outermost layer of rodlet bundles on aerial cell surfaces, conferring cellular hydrophobicity that supports fungal growth, development and dispersal; whereas Class II form highly ordered films at water-air interfaces through intermolecular interactions but contribute nothing to the rodlet structure. RodD is a an hydrophobin-like protein that, unlike rodA, is not required for rodlet formation. The chain is Hydrophobin-like protein rodD from Aspergillus fumigatus (strain ATCC MYA-4609 / CBS 101355 / FGSC A1100 / Af293) (Neosartorya fumigata).